Reading from the N-terminus, the 396-residue chain is Elongation factor Tu (396 aa).

In terms of domain architecture, tr-type G spans 10–206 (KPHVNVGTIG…ALDSYIPTPK (197 aa)). The G1 stretch occupies residues 19-26 (GHVDHGKT). GTP is bound at residue 19-26 (GHVDHGKT). Thr-26 contacts Mg(2+). The tract at residues 60-64 (GITIS) is G2. The interval 81–84 (DCPG) is G3. GTP contacts are provided by residues 81–85 (DCPGH) and 136–139 (NKAD). Residues 136–139 (NKAD) form a G4 region. The tract at residues 174–176 (SAL) is G5.

It belongs to the TRAFAC class translation factor GTPase superfamily. Classic translation factor GTPase family. EF-Tu/EF-1A subfamily. As to quaternary structure, monomer.

The protein resides in the cytoplasm. The catalysed reaction is GTP + H2O = GDP + phosphate + H(+). Its function is as follows. GTP hydrolase that promotes the GTP-dependent binding of aminoacyl-tRNA to the A-site of ribosomes during protein biosynthesis. This is Elongation factor Tu from Vesicomyosocius okutanii subsp. Calyptogena okutanii (strain HA).